A 150-amino-acid chain; its full sequence is Large ribosomal subunit protein uL13 (150 aa).

This sequence belongs to the universal ribosomal protein uL13 family. In terms of assembly, part of the 50S ribosomal subunit.

Functionally, this protein is one of the early assembly proteins of the 50S ribosomal subunit, although it is not seen to bind rRNA by itself. It is important during the early stages of 50S assembly. The polypeptide is Large ribosomal subunit protein uL13 (Chlorobaculum parvum (strain DSM 263 / NCIMB 8327) (Chlorobium vibrioforme subsp. thiosulfatophilum)).